A 124-amino-acid polypeptide reads, in one-letter code: Small ribosomal subunit protein uS12 (124 aa).

Aspartate 89 bears the 3-methylthioaspartic acid mark.

The protein belongs to the universal ribosomal protein uS12 family. In terms of assembly, part of the 30S ribosomal subunit. Contacts proteins S8 and S17. May interact with IF1 in the 30S initiation complex.

In terms of biological role, with S4 and S5 plays an important role in translational accuracy. Interacts with and stabilizes bases of the 16S rRNA that are involved in tRNA selection in the A site and with the mRNA backbone. Located at the interface of the 30S and 50S subunits, it traverses the body of the 30S subunit contacting proteins on the other side and probably holding the rRNA structure together. The combined cluster of proteins S8, S12 and S17 appears to hold together the shoulder and platform of the 30S subunit. The polypeptide is Small ribosomal subunit protein uS12 (Yersinia enterocolitica serotype O:8 / biotype 1B (strain NCTC 13174 / 8081)).